Here is a 513-residue protein sequence, read N- to C-terminus: Catalase (513 aa).

The N-terminal stretch at 1–30 is a signal peptide; that stretch reads MNPSLNAFRPGRLLVAASLTASLLSLSVQA. Catalysis depends on residues His81 and Asn153. Tyr361 serves as a coordination point for heme. Positions 391-407 are enriched in polar residues; that stretch reads DGALNAGHSTSGVNYQP. The segment at 391–413 is disordered; that stretch reads DGALNAGHSTSGVNYQPSRLDPR.

It belongs to the catalase family. It depends on heme as a cofactor.

It is found in the periplasm. The enzyme catalyses 2 H2O2 = O2 + 2 H2O. Functionally, decomposes hydrogen peroxide into water and oxygen; serves to protect cells from the toxic effects of hydrogen peroxide. This is Catalase (katB) from Pseudomonas aeruginosa (strain ATCC 15692 / DSM 22644 / CIP 104116 / JCM 14847 / LMG 12228 / 1C / PRS 101 / PAO1).